Consider the following 178-residue polypeptide: ATP-dependent protease subunit HslV (178 aa).

The active site involves Thr-8. Gly-163, Cys-166, and Thr-169 together coordinate Na(+).

It belongs to the peptidase T1B family. HslV subfamily. A double ring-shaped homohexamer of HslV is capped on each side by a ring-shaped HslU homohexamer. The assembly of the HslU/HslV complex is dependent on binding of ATP.

The protein resides in the cytoplasm. The catalysed reaction is ATP-dependent cleavage of peptide bonds with broad specificity.. With respect to regulation, allosterically activated by HslU binding. Functionally, protease subunit of a proteasome-like degradation complex believed to be a general protein degrading machinery. In Treponema denticola (strain ATCC 35405 / DSM 14222 / CIP 103919 / JCM 8153 / KCTC 15104), this protein is ATP-dependent protease subunit HslV.